We begin with the raw amino-acid sequence, 363 residues long: Phosrestin-2 (363 aa).

Belongs to the arrestin family.

This Calliphora vicina (Blue blowfly) protein is Phosrestin-2 (ARR1).